We begin with the raw amino-acid sequence, 348 residues long: Succinylglutamate desuccinylase (348 aa).

Residues His64, Glu67, and His164 each contribute to the Zn(2+) site. Residue Glu228 is part of the active site.

It belongs to the AspA/AstE family. Succinylglutamate desuccinylase subfamily. Zn(2+) is required as a cofactor.

It catalyses the reaction N-succinyl-L-glutamate + H2O = L-glutamate + succinate. Its pathway is amino-acid degradation; L-arginine degradation via AST pathway; L-glutamate and succinate from L-arginine: step 5/5. Transforms N(2)-succinylglutamate into succinate and glutamate. The chain is Succinylglutamate desuccinylase from Shewanella amazonensis (strain ATCC BAA-1098 / SB2B).